The following is a 482-amino-acid chain: Coagulation factor X (482 aa).

The signal sequence occupies residues 1 to 20; the sequence is MESPVRLSLLYVVLASLLLP. Residues 21 to 40 constitute a propeptide that is removed on maturation; that stretch reads GRSVFINRERANNVLQRIRR. Residues 41-85 enclose the Gla domain; the sequence is ANSFFEEIKKGNLERECVEEICSFEEAREVFEDNEKTTEFWNKYE. 4-carboxyglutamate occurs at positions 46, 47, 54, 56, 59, 60, 65, 66, 69, 72, 75, and 79. Cys-57 and Cys-62 are joined by a disulfide. One can recognise an EGF-like 1; calcium-binding domain in the interval 86-122; that stretch reads DGDQCESSPCQNQGECRDGLGSYTCTCTEGFEGKNCE. Intrachain disulfides connect Cys-90-Cys-101, Cys-95-Cys-110, Cys-112-Cys-121, Cys-129-Cys-140, Cys-136-Cys-149, Cys-151-Cys-164, Cys-172-Cys-340, Cys-238-Cys-243, Cys-259-Cys-275, Cys-388-Cys-402, and Cys-413-Cys-441. Asp-103 is subject to (3R)-3-hydroxyaspartate. The EGF-like 2 domain occupies 125 to 165; the sequence is VRKLCSLDNGDCDQFCREEQNSVVCSCAKGYFLGNDGKSCL. A propeptide spans 184–231 (activation peptide); the sequence is VALNTSNSEPDPEDLMPDADILYPTESPSELLNLNKTEPEANSDDVIR. N-linked (GlcNAc...) asparagine glycosylation is found at Asn-187 and Asn-218. The 234-residue stretch at 232 to 465 folds into the Peptidase S1 domain; the sequence is IVGGQECKRG…FLKWIDRSMK (234 aa). Catalysis depends on charge relay system residues His-274 and Asp-320. Residue Ser-417 is the Charge relay system of the active site.

It belongs to the peptidase S1 family. As to quaternary structure, the two chains are formed from a single-chain precursor by the excision of two Arg residues and are held together by 1 or more disulfide bonds. Forms a heterodimer with SERPINA5. Interacts with ixolaris, an anticoagulant protein from Ixodes scapularis saliva. In terms of processing, the vitamin K-dependent, enzymatic carboxylation of some glutamate residues allows the modified protein to bind calcium. Post-translationally, N- and O-glycosylated. Proteolytically cleaved and activated by cathepsin CTSG. The activation peptide is cleaved by factor IXa (in the intrinsic pathway), or by factor VIIa (in the extrinsic pathway). In terms of processing, the iron and 2-oxoglutarate dependent 3-hydroxylation of aspartate and asparagine is (R) stereospecific within EGF domains. As to expression, plasma; synthesized in the liver.

The protein resides in the secreted. The enzyme catalyses Selective cleavage of Arg-|-Thr and then Arg-|-Ile bonds in prothrombin to form thrombin.. Inhibited by SERPINA5. Factor Xa is a vitamin K-dependent glycoprotein that converts prothrombin to thrombin in the presence of factor Va, calcium and phospholipid during blood clotting. Factor Xa activates pro-inflammatory signaling pathways in a protease-activated receptor (PAR)-dependent manner. This chain is Coagulation factor X (F10), found in Rattus norvegicus (Rat).